A 451-amino-acid polypeptide reads, in one-letter code: Phosphoglucosamine mutase (451 aa).

Ser102 (phosphoserine intermediate) is an active-site residue. Mg(2+)-binding residues include Ser102, Asp242, Asp244, and Asp246. The residue at position 102 (Ser102) is a Phosphoserine.

This sequence belongs to the phosphohexose mutase family. Requires Mg(2+) as cofactor. In terms of processing, activated by phosphorylation.

It carries out the reaction alpha-D-glucosamine 1-phosphate = D-glucosamine 6-phosphate. Its function is as follows. Catalyzes the conversion of glucosamine-6-phosphate to glucosamine-1-phosphate. The sequence is that of Phosphoglucosamine mutase from Staphylococcus aureus (strain USA300).